Reading from the N-terminus, the 110-residue chain is MSLSEARFHDLVDATQQALEDLFDESGLDLDMENSAGVLTIKFDNGSQLIFSRQEPLRQLWLADRSGGFHFDYDEESGKWVCEKSEELLGEMLERIVWERAGEKLDFDEI.

The protein belongs to the frataxin family.

Its function is as follows. Involved in iron-sulfur (Fe-S) cluster assembly. May act as a regulator of Fe-S biogenesis. The polypeptide is Iron-sulfur cluster assembly protein CyaY (Pseudomonas putida (strain W619)).